The sequence spans 249 residues: tRNA pseudouridine synthase A (249 aa).

Aspartate 52 functions as the Nucleophile in the catalytic mechanism. Position 111 (tyrosine 111) interacts with substrate.

It belongs to the tRNA pseudouridine synthase TruA family. Homodimer.

It carries out the reaction uridine(38/39/40) in tRNA = pseudouridine(38/39/40) in tRNA. In terms of biological role, formation of pseudouridine at positions 38, 39 and 40 in the anticodon stem and loop of transfer RNAs. The sequence is that of tRNA pseudouridine synthase A from Brachyspira hyodysenteriae (strain ATCC 49526 / WA1).